The primary structure comprises 431 residues: Translation initiation factor 2 subunit gamma (431 aa).

Residues 26–223 (QPCVNIGMVG…ALETQIPTPS (198 aa)) form the tr-type G domain. The G1 stretch occupies residues 35–42 (GHVDHGKT). Residues aspartate 38, threonine 42, glycine 63, and serine 65 each contribute to the Mg(2+) site. A GTP-binding site is contributed by 38–43 (DHGKTT). Positions 63-67 (GISIR) are G2. Residues cysteine 78, cysteine 81, cysteine 93, and cysteine 96 each contribute to the Zn(2+) site. Residues 110 to 113 (DAPG) are G3. GTP-binding positions include 166 to 169 (NKID) and 201 to 203 (SAQ). The tract at residues 166-169 (NKID) is G4. Residues 201–203 (SAQ) form a G5 region.

It belongs to the TRAFAC class translation factor GTPase superfamily. Classic translation factor GTPase family. EIF2G subfamily. As to quaternary structure, heterotrimer composed of an alpha, a beta and a gamma chain. The cofactor is Mg(2+).

It catalyses the reaction GTP + H2O = GDP + phosphate + H(+). Its function is as follows. eIF-2 functions in the early steps of protein synthesis by forming a ternary complex with GTP and initiator tRNA. The protein is Translation initiation factor 2 subunit gamma of Methanosarcina mazei (strain ATCC BAA-159 / DSM 3647 / Goe1 / Go1 / JCM 11833 / OCM 88) (Methanosarcina frisia).